Consider the following 337-residue polypeptide: Nucleoid-associated protein PBPRA2585 (337 aa).

The protein belongs to the YejK family.

Its subcellular location is the cytoplasm. The protein resides in the nucleoid. This Photobacterium profundum (strain SS9) protein is Nucleoid-associated protein PBPRA2585.